The sequence spans 391 residues: Calcium-binding and spermatid-specific protein 1 (391 aa).

Disordered regions lie at residues 1-23 (MAED…TPTE), 90-110 (PEKE…GSIT), and 152-221 (KEVV…KEVT). A compositionally biased stretch (low complexity) spans 90–101 (PEKEITTPTETP). Phosphoserine is present on residues S253 and S269. Residues 271 to 299 (EKAKDNVEDPLNDEESTDGANDWMEKETA) form a disordered region. Residues 278 to 287 (EDPLNDEEST) are compositionally biased toward acidic residues. 5 positions are modified to phosphoserine: S314, S347, S357, S372, and S376. Residues 330–351 (EESHVNTTDLPENETTESVTNV) are disordered.

In terms of tissue distribution, detected only in testis. Expressed from stages X to VIII of the seminiferous epithelial cycle. Expressed from step 13 to step 16 of spermatid development (at protein level).

The protein localises to the cytoplasm. It localises to the mitochondrion inner membrane. Its subcellular location is the cell projection. It is found in the cilium. The protein resides in the flagellum. The protein localises to the cytoplasmic vesicle. It localises to the secretory vesicle. Its subcellular location is the acrosome. Functionally, calcium-binding protein. Essential for maintaining the structural integrity of the sperm flagella. In Mus musculus (Mouse), this protein is Calcium-binding and spermatid-specific protein 1 (Cabs1).